A 145-amino-acid polypeptide reads, in one-letter code: Basic phospholipase A2 PC17 (145 aa).

Residues 1–21 (MYPAHLLLLLAVCVSLLGASA) form the signal peptide. The propeptide occupies 22 to 27 (IPPLPL). Disulfide bonds link Cys-38–Cys-98, Cys-54–Cys-144, Cys-56–Cys-72, Cys-71–Cys-125, Cys-78–Cys-118, Cys-87–Cys-111, and Cys-105–Cys-116. Residues Tyr-55, Gly-57, and Gly-59 each contribute to the Ca(2+) site. His-75 is a catalytic residue. Asp-76 is a binding site for Ca(2+). Residue Asp-119 is part of the active site.

The protein belongs to the phospholipase A2 family. Group I subfamily. D49 sub-subfamily. It depends on Ca(2+) as a cofactor.

The protein localises to the secreted. The catalysed reaction is a 1,2-diacyl-sn-glycero-3-phosphocholine + H2O = a 1-acyl-sn-glycero-3-phosphocholine + a fatty acid + H(+). In terms of biological role, PLA2 catalyzes the calcium-dependent hydrolysis of the 2-acyl groups in 3-sn-phosphoglycerides. The chain is Basic phospholipase A2 PC17 from Laticauda laticaudata (Blue-ringed sea krait).